The sequence spans 494 residues: UDP-N-acetylmuramoyl-L-alanyl-D-glutamate--L-lysine ligase (494 aa).

Serine 30 is a UDP-N-acetyl-alpha-D-muramoyl-L-alanyl-D-glutamate binding site. 110–116 serves as a coordination point for ATP; it reads GTNGKTS. UDP-N-acetyl-alpha-D-muramoyl-L-alanyl-D-glutamate contacts are provided by residues 152-153, serine 179, and arginine 187; that span reads TT. Position 219 is an N6-carboxylysine (lysine 219). Positions 406–409 match the L-lysine recognition motif motif; the sequence is DNPA.

It belongs to the MurCDEF family. MurE subfamily. Carboxylation is probably crucial for Mg(2+) binding and, consequently, for the gamma-phosphate positioning of ATP.

It is found in the cytoplasm. It carries out the reaction UDP-N-acetyl-alpha-D-muramoyl-L-alanyl-D-glutamate + L-lysine + ATP = UDP-N-acetyl-alpha-D-muramoyl-L-alanyl-gamma-D-glutamyl-L-lysine + ADP + phosphate + H(+). Its pathway is cell wall biogenesis; peptidoglycan biosynthesis. In terms of biological role, catalyzes the addition of L-lysine to the nucleotide precursor UDP-N-acetylmuramoyl-L-alanyl-D-glutamate (UMAG) in the biosynthesis of bacterial cell-wall peptidoglycan. The chain is UDP-N-acetylmuramoyl-L-alanyl-D-glutamate--L-lysine ligase from Staphylococcus aureus (strain MW2).